The following is a 152-amino-acid chain: Nucleoside diphosphate kinase B (152 aa).

The segment at 1–66 (MAHAERTFIA…DRPFFPGLVK (66 aa)) is interaction with AKAP13. 6 residues coordinate ATP: lysine 12, phenylalanine 60, arginine 88, threonine 94, arginine 105, and asparagine 115. Histidine 118 (pros-phosphohistidine intermediate) is an active-site residue.

Belongs to the NDK family. In terms of assembly, hexamer of two different chains: An and B (A6, A5B, A4B2, A3B3, A2B4, AB5, B6). Interacts with CAPN8. Interacts with AKAP13. Interacts with ITGB1BP1 (via C-terminal domain region). Interacts with BCL2L10. Mg(2+) is required as a cofactor.

It localises to the cytoplasm. The protein resides in the cell projection. Its subcellular location is the lamellipodium. The protein localises to the ruffle. It is found in the nucleus. The catalysed reaction is a 2'-deoxyribonucleoside 5'-diphosphate + ATP = a 2'-deoxyribonucleoside 5'-triphosphate + ADP. The enzyme catalyses a ribonucleoside 5'-diphosphate + ATP = a ribonucleoside 5'-triphosphate + ADP. It carries out the reaction ATP + protein L-histidine = ADP + protein N-phospho-L-histidine.. In terms of biological role, major role in the synthesis of nucleoside triphosphates other than ATP. The ATP gamma phosphate is transferred to the NDP beta phosphate via a ping-pong mechanism, using a phosphorylated active-site intermediate. Negatively regulates Rho activity by interacting with AKAP13/LBC. Acts as a transcriptional activator of the MYC gene; binds DNA non-specifically. Binds to both single-stranded guanine- and cytosine-rich strands within the nuclease hypersensitive element (NHE) III(1) region of the MYC gene promoter. Does not bind to duplex NHE III(1). Has G-quadruplex (G4) DNA-binding activity, which is independent of its nucleotide-binding and kinase activity. Binds both folded and unfolded G4 with similar low nanomolar affinities. Stabilizes folded G4s regardless of whether they are prefolded or not. Exhibits histidine protein kinase activity. The sequence is that of Nucleoside diphosphate kinase B (NME2) from Bos taurus (Bovine).